Consider the following 1487-residue polypeptide: Protein cft1 (1487 aa).

Over residues 486–504 (DLDLDDEDLEDDDDDDLYG) the composition is skewed to acidic residues. The segment at 486–513 (DLDLDDEDLEDDDDDDLYGEESASPEQA) is disordered.

It belongs to the CFT1 family.

The protein resides in the nucleus. Functionally, RNA-binding component of the cleavage and polyadenylation factor (CPF) complex, which plays a key role in polyadenylation-dependent pre-mRNA 3'-end formation and cooperates with cleavage factors including the CFIA complex and hrp1/CFIB. Involved in poly(A) site recognition. May be involved in coupling transcription termination and mRNA 3'-end formation. The protein is Protein cft1 (paa-3) of Neurospora crassa (strain ATCC 24698 / 74-OR23-1A / CBS 708.71 / DSM 1257 / FGSC 987).